The chain runs to 130 residues: WAP four-disulfide core domain protein 3 (130 aa).

A signal peptide spans 1–16; that stretch reads MKALLALGFLASWVAA. WAP domains lie at 17 to 61 and 62 to 106; these read GEHA…RGDI and EGGR…IPGL. 8 disulfide bridges follow: Cys-25–Cys-49, Cys-32–Cys-53, Cys-36–Cys-48, Cys-42–Cys-57, Cys-69–Cys-94, Cys-77–Cys-98, Cys-81–Cys-93, and Cys-87–Cys-102. The N-linked (GlcNAc...) asparagine glycan is linked to Asn-116.

It localises to the secreted. In Mus musculus (Mouse), this protein is WAP four-disulfide core domain protein 3 (Wfdc3).